Consider the following 89-residue polypeptide: UPF0297 protein lp_2275 (89 aa).

This sequence belongs to the UPF0297 family.

The sequence is that of UPF0297 protein lp_2275 from Lactiplantibacillus plantarum (strain ATCC BAA-793 / NCIMB 8826 / WCFS1) (Lactobacillus plantarum).